The primary structure comprises 118 residues: Large ribosomal subunit protein bL19 (118 aa).

This sequence belongs to the bacterial ribosomal protein bL19 family.

Its function is as follows. This protein is located at the 30S-50S ribosomal subunit interface and may play a role in the structure and function of the aminoacyl-tRNA binding site. The chain is Large ribosomal subunit protein bL19 from Nautilia profundicola (strain ATCC BAA-1463 / DSM 18972 / AmH).